Here is a 285-residue protein sequence, read N- to C-terminus: Bifunctional protein FolD (285 aa).

NADP(+) is bound by residues 166–168 (GAS) and isoleucine 232.

This sequence belongs to the tetrahydrofolate dehydrogenase/cyclohydrolase family. As to quaternary structure, homodimer.

It catalyses the reaction (6R)-5,10-methylene-5,6,7,8-tetrahydrofolate + NADP(+) = (6R)-5,10-methenyltetrahydrofolate + NADPH. The catalysed reaction is (6R)-5,10-methenyltetrahydrofolate + H2O = (6R)-10-formyltetrahydrofolate + H(+). Its pathway is one-carbon metabolism; tetrahydrofolate interconversion. Catalyzes the oxidation of 5,10-methylenetetrahydrofolate to 5,10-methenyltetrahydrofolate and then the hydrolysis of 5,10-methenyltetrahydrofolate to 10-formyltetrahydrofolate. The sequence is that of Bifunctional protein FolD from Aliivibrio fischeri (strain MJ11) (Vibrio fischeri).